A 276-amino-acid polypeptide reads, in one-letter code: Diaminopimelate epimerase (276 aa).

Substrate contacts are provided by Asn-13, Gln-46, and Asn-66. The active-site Proton donor is the Cys-75. Residues 76–77 (GN), Asn-159, Asn-192, and 210–211 (ER) contribute to the substrate site. The active-site Proton acceptor is the Cys-219. Substrate is bound at residue 220–221 (GT).

Belongs to the diaminopimelate epimerase family. Homodimer.

The protein resides in the cytoplasm. The catalysed reaction is (2S,6S)-2,6-diaminopimelate = meso-2,6-diaminopimelate. Its pathway is amino-acid biosynthesis; L-lysine biosynthesis via DAP pathway; DL-2,6-diaminopimelate from LL-2,6-diaminopimelate: step 1/1. Functionally, catalyzes the stereoinversion of LL-2,6-diaminopimelate (L,L-DAP) to meso-diaminopimelate (meso-DAP), a precursor of L-lysine and an essential component of the bacterial peptidoglycan. In Cellvibrio japonicus (strain Ueda107) (Pseudomonas fluorescens subsp. cellulosa), this protein is Diaminopimelate epimerase.